We begin with the raw amino-acid sequence, 438 residues long: Xylose isomerase (438 aa).

Catalysis depends on residues His102 and Asp105. Mg(2+)-binding residues include Glu233, Glu269, His272, Asp297, Asp308, Asp310, and Asp340.

The protein belongs to the xylose isomerase family. In terms of assembly, homotetramer. Requires Mg(2+) as cofactor.

The protein resides in the cytoplasm. The enzyme catalyses alpha-D-xylose = alpha-D-xylulofuranose. The protein is Xylose isomerase of Solibacter usitatus (strain Ellin6076).